Reading from the N-terminus, the 203-residue chain is Peptidyl-prolyl cis-trans isomerase FKBP11 (203 aa).

A signal peptide spans 1–29 (MTLRPSLLPLRLLLLLLLLLRGAVCQAEA). One can recognise a PPIase FKBP-type domain in the interval 59–146 (GDTLHIHYSG…HFDVELIALI (88 aa)). A helical membrane pass occupies residues 158 to 178 (ILPLVGMAMVPALLGLIGYHL).

Belongs to the FKBP-type PPIase family. As to quaternary structure, interacts with IFITM5.

The protein resides in the membrane. The catalysed reaction is [protein]-peptidylproline (omega=180) = [protein]-peptidylproline (omega=0). Functionally, PPIases accelerate the folding of proteins during protein synthesis. The chain is Peptidyl-prolyl cis-trans isomerase FKBP11 (FKBP11) from Bos taurus (Bovine).